We begin with the raw amino-acid sequence, 497 residues long: uncharacterized protein (497 aa).

An ATP-binding site is contributed by 266–273 (GIQGTGKS).

This sequence belongs to the AAA ATPase family. Highly divergent.

Its subcellular location is the plastid. It localises to the chloroplast. This is an uncharacterized protein from Trieres chinensis (Marine centric diatom).